The sequence spans 197 residues: Protein GrpE (197 aa).

Residues 1–31 (MSDDTKKQDTAADAEVEKEMEGVPEHLRDDR) show a composition bias toward basic and acidic residues. Residues 1 to 48 (MSDDTKKQDTAADAEVEKEMEGVPEHLRDDRGSEEDASDDLSAALESL) form a disordered region.

This sequence belongs to the GrpE family. Homodimer.

It localises to the cytoplasm. In terms of biological role, participates actively in the response to hyperosmotic and heat shock by preventing the aggregation of stress-denatured proteins, in association with DnaK and GrpE. It is the nucleotide exchange factor for DnaK and may function as a thermosensor. Unfolded proteins bind initially to DnaJ; upon interaction with the DnaJ-bound protein, DnaK hydrolyzes its bound ATP, resulting in the formation of a stable complex. GrpE releases ADP from DnaK; ATP binding to DnaK triggers the release of the substrate protein, thus completing the reaction cycle. Several rounds of ATP-dependent interactions between DnaJ, DnaK and GrpE are required for fully efficient folding. In Erythrobacter litoralis (strain HTCC2594), this protein is Protein GrpE.